The primary structure comprises 194 residues: N-acetyltransferase (194 aa).

The region spanning proline 9 to glutamate 173 is the N-acetyltransferase domain.

This sequence belongs to the acetyltransferase family. PAT/BAR subfamily.

The protein is N-acetyltransferase (nat) of Streptomyces griseus.